We begin with the raw amino-acid sequence, 436 residues long: Elongation factor 1-gamma-A (436 aa).

A GST N-terminal domain is found at 2 to 87 (AGGTLYTYPD…YVGNDELRGT (86 aa)). Residues 88 to 221 (TRLHQAQVIQ…KMAQFDAKKF (134 aa)) form the GST C-terminal domain. Composition is skewed to basic and acidic residues over residues 221–249 (FAEM…EKKK) and 265–278 (SEKA…SKDP). Positions 221-278 (FAEMQPKKETPKKEKPAKEPKKEKEEKKKAAPTPAPAPEDDLDESEKALAAEPKSKDP) are disordered. Positions 275–436 (SKDPYAHLPK…KPFNQGKIFK (162 aa)) constitute an EF-1-gamma C-terminal domain.

As to quaternary structure, EF-1 is composed of four subunits: alpha, beta, delta, and gamma. Phosphorylated by CDK1. In terms of processing, the N-terminus is blocked.

Probably plays a role in anchoring the complex to other cellular components. This is Elongation factor 1-gamma-A (eef1g-a) from Xenopus laevis (African clawed frog).